The following is a 124-amino-acid chain: Small ribosomal subunit protein uS12 (124 aa).

Position 89 is a 3-methylthioaspartic acid (Asp89). The segment at 101 to 124 (TLDTSGVKDRRQSRSKYGAKAPKE) is disordered.

This sequence belongs to the universal ribosomal protein uS12 family. As to quaternary structure, part of the 30S ribosomal subunit. Contacts proteins S8 and S17. May interact with IF1 in the 30S initiation complex.

With S4 and S5 plays an important role in translational accuracy. In terms of biological role, interacts with and stabilizes bases of the 16S rRNA that are involved in tRNA selection in the A site and with the mRNA backbone. Located at the interface of the 30S and 50S subunits, it traverses the body of the 30S subunit contacting proteins on the other side and probably holding the rRNA structure together. The combined cluster of proteins S8, S12 and S17 appears to hold together the shoulder and platform of the 30S subunit. This is Small ribosomal subunit protein uS12 from Synechococcus sp. (strain CC9902).